We begin with the raw amino-acid sequence, 274 residues long: NH(3)-dependent NAD(+) synthetase (274 aa).

Residue 46–53 coordinates ATP; sequence GISGGQDS. Residue aspartate 52 coordinates Mg(2+). Deamido-NAD(+) is bound at residue arginine 140. ATP is bound at residue threonine 160. Residue glutamate 165 coordinates Mg(2+). Deamido-NAD(+) is bound by residues lysine 173 and aspartate 180. Positions 189 and 211 each coordinate ATP. 260 to 261 contributes to the deamido-NAD(+) binding site; sequence HK.

Belongs to the NAD synthetase family. Homodimer.

The enzyme catalyses deamido-NAD(+) + NH4(+) + ATP = AMP + diphosphate + NAD(+) + H(+). Its pathway is cofactor biosynthesis; NAD(+) biosynthesis; NAD(+) from deamido-NAD(+) (ammonia route): step 1/1. Functionally, catalyzes the ATP-dependent amidation of deamido-NAD to form NAD. Uses ammonia as a nitrogen source. The sequence is that of NH(3)-dependent NAD(+) synthetase from Sodalis glossinidius (strain morsitans).